Reading from the N-terminus, the 230-residue chain is NAD(P)H-hydrate epimerase (230 aa).

Residues 11-218 (AIAVDQELFN…ALQRKYELNL (208 aa)) form the YjeF N-terminal domain. Position 61–65 (61–65 (NNGGD)) interacts with (6S)-NADPHX. K(+)-binding residues include N62 and D126. (6S)-NADPHX contacts are provided by residues 130 to 136 (GFSFKPP) and D159. S162 contributes to the K(+) binding site.

The protein belongs to the NnrE/AIBP family. It depends on K(+) as a cofactor.

It carries out the reaction (6R)-NADHX = (6S)-NADHX. The catalysed reaction is (6R)-NADPHX = (6S)-NADPHX. In terms of biological role, catalyzes the epimerization of the S- and R-forms of NAD(P)HX, a damaged form of NAD(P)H that is a result of enzymatic or heat-dependent hydration. This is a prerequisite for the S-specific NAD(P)H-hydrate dehydratase to allow the repair of both epimers of NAD(P)HX. The protein is NAD(P)H-hydrate epimerase of Drosophila sechellia (Fruit fly).